A 329-amino-acid polypeptide reads, in one-letter code: Transcription factor TGA2.3 (329 aa).

A disordered region spans residues 1-48 (MADMSPRTDTSTDDTDDNHMLEPGQLALAAASDSDRSKDKHEDQKTLR). Basic and acidic residues predominate over residues 33–46 (DSDRSKDKHEDQKT). The bZIP domain maps to 43 to 87 (DQKTLRRLAQNREAARKSRLRKKAYVQQLENSRLKLTQLEQELQR). Positions 45–65 (KTLRRLAQNREAARKSRLRKK) are basic motif. The leucine-zipper stretch occupies residues 71-85 (LENSRLKLTQLEQEL). The DOG1 domain occupies 110–326 (ALAFDMEYAR…RALSSLWLAR (217 aa)).

Belongs to the bZIP family. As to quaternary structure, interacts with NPR1/NH1 and NPR3/NH3.

The protein resides in the nucleus. In terms of biological role, transcriptional regulator involved in defense response. The polypeptide is Transcription factor TGA2.3 (Oryza sativa subsp. japonica (Rice)).